The following is a 250-amino-acid chain: Probable transcriptional regulatory protein RHA1_ro06891 (250 aa).

The protein belongs to the TACO1 family.

It is found in the cytoplasm. The protein is Probable transcriptional regulatory protein RHA1_ro06891 of Rhodococcus jostii (strain RHA1).